The primary structure comprises 239 residues: Small ribosomal subunit protein uS2 (239 aa).

Belongs to the universal ribosomal protein uS2 family.

The sequence is that of Small ribosomal subunit protein uS2 from Prochlorococcus marinus (strain MIT 9303).